A 159-amino-acid polypeptide reads, in one-letter code: Ribosomal RNA large subunit methyltransferase H (159 aa).

S-adenosyl-L-methionine is bound by residues leucine 76, glycine 108, and 127–132; that span reads FSKMTF.

This sequence belongs to the RNA methyltransferase RlmH family. As to quaternary structure, homodimer.

Its subcellular location is the cytoplasm. It carries out the reaction pseudouridine(1915) in 23S rRNA + S-adenosyl-L-methionine = N(3)-methylpseudouridine(1915) in 23S rRNA + S-adenosyl-L-homocysteine + H(+). Specifically methylates the pseudouridine at position 1915 (m3Psi1915) in 23S rRNA. This chain is Ribosomal RNA large subunit methyltransferase H, found in Clostridium botulinum (strain Okra / Type B1).